We begin with the raw amino-acid sequence, 449 residues long: tRNA modification GTPase MnmE (449 aa).

(6S)-5-formyl-5,6,7,8-tetrahydrofolate is bound by residues arginine 24, glutamate 85, and arginine 124. Positions 220–369 (GIRTAIAGPP…LEEAIIQAFS (150 aa)) constitute a TrmE-type G domain. Asparagine 230 is a binding site for K(+). GTP is bound by residues 230–235 (NVGKSS), 249–255 (SNIAGTT), and 274–277 (DTAG). Residue serine 234 participates in Mg(2+) binding. Residues serine 249, isoleucine 251, and threonine 254 each coordinate K(+). Residue threonine 255 coordinates Mg(2+). Residue lysine 449 participates in (6S)-5-formyl-5,6,7,8-tetrahydrofolate binding.

The protein belongs to the TRAFAC class TrmE-Era-EngA-EngB-Septin-like GTPase superfamily. TrmE GTPase family. In terms of assembly, homodimer. Heterotetramer of two MnmE and two MnmG subunits. The cofactor is K(+).

The protein localises to the cytoplasm. Functionally, exhibits a very high intrinsic GTPase hydrolysis rate. Involved in the addition of a carboxymethylaminomethyl (cmnm) group at the wobble position (U34) of certain tRNAs, forming tRNA-cmnm(5)s(2)U34. In Akkermansia muciniphila (strain ATCC BAA-835 / DSM 22959 / JCM 33894 / BCRC 81048 / CCUG 64013 / CIP 107961 / Muc), this protein is tRNA modification GTPase MnmE.